A 244-amino-acid chain; its full sequence is S-adenosyl-L-methionine-dependent Diels-Alderase iliD (244 aa).

It belongs to the class I-like SAM-binding methyltransferase superfamily. Erg6/SMT family. It depends on S-adenosyl-L-methionine as a cofactor.

The catalysed reaction is 3-[(2E,4E,8S,10E,12Z)-4,8-dimethyltetradeca-2,4,10,12-tetraenoyl]-4-hydroxy-5-(4-hydroxyphenyl)-1,2-dihydropyridin-2-one = ilicicolin H. It participates in mycotoxin biosynthesis. Its function is as follows. S-adenosyl-l-methionine-dependent Diels-Alderase; part of the gene cluster that mediates the biosynthesis of ilicicolin H, a 4-hydroxy-2-pyridonealkaloid that has potent and broad antifungal activities by inhibiting the mitochondrial respiration chain. IliD catalyzes the Diels-Alder reaction that converts the acyclic 2-pyridone intermediate to 8-epi-ilicicolin H. The biosynthesis of ilicicolin H starts with formation of the tetramic acid by the hybrid PKS-NRPS synthetase iliA with the partnering trans-enoyl reductase iliB since iliA lacks a designated enoylreductase (ER) domain. The cytochrome P450 monooxygenase iliC then catalyzes the ring expansion of the tetramate to the acyclic 2-pyridone. The pericyclase iliD further converts the acyclic 2-pyridone into 8-epi-ilicicolin H. 8-epi-ilicicolin H might then spontaneously convert to ilicicolin H since ilicicolin H is produced in the absence of the epimerase iliE, in contrast to what was observed for the Talaromyces variabilis ilicolin H biosynthetic pathway. The sequence is that of S-adenosyl-L-methionine-dependent Diels-Alderase iliD from Neonectria sp. (strain DH2).